The primary structure comprises 123 residues: Small ribosomal subunit protein uS12 (123 aa).

Position 89 is a 3-methylthioaspartic acid (D89).

It belongs to the universal ribosomal protein uS12 family. As to quaternary structure, part of the 30S ribosomal subunit. Contacts proteins S8 and S17. May interact with IF1 in the 30S initiation complex.

With S4 and S5 plays an important role in translational accuracy. In terms of biological role, interacts with and stabilizes bases of the 16S rRNA that are involved in tRNA selection in the A site and with the mRNA backbone. Located at the interface of the 30S and 50S subunits, it traverses the body of the 30S subunit contacting proteins on the other side and probably holding the rRNA structure together. The combined cluster of proteins S8, S12 and S17 appears to hold together the shoulder and platform of the 30S subunit. This is Small ribosomal subunit protein uS12 from Gluconobacter oxydans (strain 621H) (Gluconobacter suboxydans).